Here is a 320-residue protein sequence, read N- to C-terminus: Zinc transporter ZitB (320 aa).

6 helical membrane-spanning segments follow: residues 16-36 (LLAA…GGLL), 43-63 (LADA…LVAV), 85-105 (AAFV…WEAI), 117-137 (VPML…FWLL), 153-173 (LHVL…IIIL), and 180-200 (IDPI…WALL).

Belongs to the cation diffusion facilitator (CDF) transporter (TC 2.A.4) family. SLC30A subfamily.

Its subcellular location is the cell inner membrane. Its function is as follows. Involved in zinc efflux across the cytoplasmic membrane, thus reducing zinc accumulation in the cytoplasm and rendering bacteria more resistant to zinc. It may contribute to zinc homeostasis at low concentrations of zinc. The protein is Zinc transporter ZitB of Pectobacterium atrosepticum (strain SCRI 1043 / ATCC BAA-672) (Erwinia carotovora subsp. atroseptica).